The chain runs to 232 residues: Putative dimethylsulfoniopropionate lyase DddL (232 aa).

A divalent metal cation contacts are provided by His154, Glu159, Tyr161, and His190.

Belongs to the non-heme iron-dependent dioxygenase family. In terms of assembly, homodimer. A divalent metal cation is required as a cofactor.

It catalyses the reaction S,S-dimethyl-beta-propiothetin = acrylate + dimethyl sulfide + H(+). In terms of biological role, may cleave dimethylsulfoniopropionate (DMSP), releasing dimethyl sulfide (DMS). DMS is the principal form by which sulfur is transported from oceans to the atmosphere. The real activity of the protein is however subject to debate and it is unclear whether it constitutes a real dimethylsulfoniopropionate lyase in vivo. This chain is Putative dimethylsulfoniopropionate lyase DddL (dddL), found in Cereibacter sphaeroides (strain ATCC 17023 / DSM 158 / JCM 6121 / CCUG 31486 / LMG 2827 / NBRC 12203 / NCIMB 8253 / ATH 2.4.1.) (Rhodobacter sphaeroides).